Consider the following 2568-residue polypeptide: Highly reducing polyketide synthase AN6791 (2568 aa).

The Ketosynthase family 3 (KS3) domain maps to 11–445; it reads AEPIAIVGLS…GTNAHLIVES (435 aa). Active-site for beta-ketoacyl synthase activity residues include Cys200, His326, and His366. A Malonyl-CoA:ACP transacylase (MAT) domain is found at 558–882; it reads VFTGQGAQWY…GSLVREVSAV (325 aa). The N-terminal hotdog fold stretch occupies residues 949–1087; that stretch reads HDLLGSLVLG…GLITMEPEDA (139 aa). The PKS/mFAS DH domain maps to 949 to 1258; the sequence is HDLLGSLVLG…FQSVGRSAAP (310 aa). His981 functions as the Proton acceptor; for dehydratase activity in the catalytic mechanism. Residues 1104–1258 form a C-terminal hotdog fold region; the sequence is TRRFGPSDLY…FQSVGRSAAP (155 aa). Asp1169 functions as the Proton donor; for dehydratase activity in the catalytic mechanism. Positions 1311–1620 are methyltransferase (CMet) domain; the sequence is RACLYFIYDA…EVRDCESDEW (310 aa). The Enoyl reductase (ER) domain maps to 1857–2174; sequence GLLDTIAFDD…VGKHSGKVVL (318 aa). The Ketoreductase (KR) domain maps to 2197–2375; the sequence is ASYLLVGGAG…AVSMDLGPVK (179 aa). In terms of domain architecture, Carrier spans 2481–2558; that stretch reads QAEKLVVEAI…ALASEVTRKS (78 aa). Ser2518 is modified (O-(pantetheine 4'-phosphoryl)serine).

Pantetheine 4'-phosphate is required as a cofactor.

It functions in the pathway secondary metabolite biosynthesis. Highly reducing polyketide synthase; part of a cluster that mediates the biosynthesis of a yet undetermined secondary metabolite. With esterase AN6793, produces a pathway intermediate compound with molecular weight 258. This chain is Highly reducing polyketide synthase AN6791, found in Emericella nidulans (strain FGSC A4 / ATCC 38163 / CBS 112.46 / NRRL 194 / M139) (Aspergillus nidulans).